The primary structure comprises 295 residues: Dehydrodolichyl diphosphate synthase 6 (295 aa).

This sequence belongs to the UPP synthase family. Requires Mg(2+) as cofactor.

Its pathway is protein modification; protein glycosylation. In terms of biological role, catalyzes cis-prenyl chain elongation to produce the polyprenyl backbone of dolichol, a glycosyl carrier-lipid required for the biosynthesis of several classes of glycoprotein. The sequence is that of Dehydrodolichyl diphosphate synthase 6 from Arabidopsis thaliana (Mouse-ear cress).